The following is a 1079-amino-acid chain: Capping protein inhibiting regulator of actin dynamics (1079 aa).

Residues 1 to 11 show a composition bias toward basic and acidic residues; it reads MSQENVSDKVR. Disordered regions lie at residues 1 to 293, 308 to 327, 341 to 383, 420 to 453, 493 to 522, 606 to 639, and 658 to 1054; these read MSQE…EEER, ERKR…AEKR, EHRI…EWKR, PVTP…PTLS, EGKK…VFES, IFGQ…VQSR, and PSFL…TTQV. Positions 36-45 are enriched in acidic residues; the sequence is DEGSSDEEEV. Residues 64–76 show a composition bias toward basic and acidic residues; sequence SAKEKSVSHDTVQ. Basic residues predominate over residues 115–134; the sequence is AKHKLSVKPKNQRVSRKHRR. Positions 140 to 158 are enriched in acidic residues; the sequence is HEDDFSEIQEEFEKDEEVF. Basic and acidic residues predominate over residues 159–293; that stretch reads DSSREDYGII…EERKRAEEER (135 aa). Over residues 420 to 434 the composition is skewed to polar residues; the sequence is PVTPATGQQGETTAE. Residues 670 to 682 show a composition bias toward polar residues; that stretch reads PKSQRSESGSPIQ. The segment covering 684–695 has biased composition (acidic residues); it reads ESEDSDTKDEDG. The span at 756–781 shows a compositional bias: polar residues; that stretch reads DNSTLSEKSSPISPQQENIEFQTTVA. Basic and acidic residues-rich tracts occupy residues 896–930 and 944–983; these read WREK…DKET and GFRE…EDKG. The segment covering 984–993 has biased composition (polar residues); that stretch reads NGSSSIISKH. Residues 994-1016 show a composition bias toward basic and acidic residues; sequence QTADENKRPDTLLARFERRDNLK. A compositionally biased stretch (polar residues) spans 1020 to 1033; the sequence is TLPSSVTVEITDST.

In terms of assembly, directly interacts with actin-capping proteins; this interaction decreases the binding of capping proteins to actin.

The protein resides in the cytoplasm. The protein localises to the cytosol. In terms of biological role, involved in epithelial cell integrity by acting on the maintenance of the actin cytoskeleton. Positively regulates the actin polymerization, by inhibiting the interaction of actin-capping proteins with actin. The protein is Capping protein inhibiting regulator of actin dynamics (crad) of Danio rerio (Zebrafish).